An 864-amino-acid chain; its full sequence is Protein sey1 (864 aa).

The Cytoplasmic portion of the chain corresponds to 1–747 (MATNGHFATI…KRSAIGGMTQ (747 aa)). Positions 49 to 305 (GFNYHLISVF…IPADGFSRYA (257 aa)) constitute a GB1/RHD3-type G domain. Residue 59 to 66 (GSQSTGKS) coordinates GTP. Positions 480–506 (SDYKQELALYEKELADVSGRLRREEMR) form a coiled coil. A disordered region spans residues 675-701 (DRWIGHTPSSATPADEEDLPPIGGVDE). A compositionally biased stretch (acidic residues) spans 688–701 (ADEEDLPPIGGVDE). The helical transmembrane segment at 748–768 (VPLYFYGLLLALGWNEIIAVL) threads the bilayer. Topologically, residues 769-771 (RNP) are lumenal. A helical transmembrane segment spans residues 772–792 (AYFFLLFVCAVGAYVTYQLNL). Topologically, residues 793 to 864 (WGPIIKMTEA…TSADEDMDDL (72 aa)) are cytoplasmic. The disordered stretch occupies residues 830 to 864 (AMSAGSGRSGEQYELSDLSKKGKARTSADEDMDDL).

Belongs to the TRAFAC class dynamin-like GTPase superfamily. GB1/RHD3 GTPase family. RHD3 subfamily.

The protein localises to the endoplasmic reticulum membrane. Cooperates with the reticulon proteins and tubule-shaping DP1 family proteins to generate and maintain the structure of the tubular endoplasmic reticulum network. Has GTPase activity, which is required for its function in ER organization. The sequence is that of Protein sey1 (sey1) from Neosartorya fischeri (strain ATCC 1020 / DSM 3700 / CBS 544.65 / FGSC A1164 / JCM 1740 / NRRL 181 / WB 181) (Aspergillus fischerianus).